We begin with the raw amino-acid sequence, 437 residues long: Glutamate-1-semialdehyde 2,1-aminomutase (437 aa).

Lys274 is subject to N6-(pyridoxal phosphate)lysine.

This sequence belongs to the class-III pyridoxal-phosphate-dependent aminotransferase family. HemL subfamily. In terms of assembly, homodimer. Requires pyridoxal 5'-phosphate as cofactor.

The protein localises to the cytoplasm. It carries out the reaction (S)-4-amino-5-oxopentanoate = 5-aminolevulinate. The protein operates within porphyrin-containing compound metabolism; protoporphyrin-IX biosynthesis; 5-aminolevulinate from L-glutamyl-tRNA(Glu): step 2/2. The chain is Glutamate-1-semialdehyde 2,1-aminomutase from Leptothrix cholodnii (strain ATCC 51168 / LMG 8142 / SP-6) (Leptothrix discophora (strain SP-6)).